The primary structure comprises 725 residues: 1,4-alpha-glucan branching enzyme GlgB (725 aa).

The active-site Nucleophile is the D403. The active-site Proton donor is E456.

This sequence belongs to the glycosyl hydrolase 13 family. GlgB subfamily. Monomer.

It carries out the reaction Transfers a segment of a (1-&gt;4)-alpha-D-glucan chain to a primary hydroxy group in a similar glucan chain.. It functions in the pathway glycan biosynthesis; glycogen biosynthesis. Its function is as follows. Catalyzes the formation of the alpha-1,6-glucosidic linkages in glycogen by scission of a 1,4-alpha-linked oligosaccharide from growing alpha-1,4-glucan chains and the subsequent attachment of the oligosaccharide to the alpha-1,6 position. This Pectobacterium atrosepticum (strain SCRI 1043 / ATCC BAA-672) (Erwinia carotovora subsp. atroseptica) protein is 1,4-alpha-glucan branching enzyme GlgB.